Here is a 688-residue protein sequence, read N- to C-terminus: Polyribonucleotide nucleotidyltransferase (688 aa).

2 residues coordinate Mg(2+): D484 and D490. The 60-residue stretch at 550-609 folds into the KH domain; it reads PTTEIFNVAPDKIVEIIGQGGRVIREIVEKFEVKIDLNKPSGEVKIMGNKERVLKTKEFI. One can recognise an S1 motif domain in the interval 626–688; the sequence is DEVLEAQVKR…NKGKIALDLA (63 aa).

It belongs to the polyribonucleotide nucleotidyltransferase family. Mg(2+) is required as a cofactor.

The protein localises to the cytoplasm. It carries out the reaction RNA(n+1) + phosphate = RNA(n) + a ribonucleoside 5'-diphosphate. Its function is as follows. Involved in mRNA degradation. Catalyzes the phosphorolysis of single-stranded polyribonucleotides processively in the 3'- to 5'-direction. This Helicobacter pylori (strain Shi470) protein is Polyribonucleotide nucleotidyltransferase.